A 382-amino-acid polypeptide reads, in one-letter code: Lipid-A-disaccharide synthase (382 aa).

It belongs to the LpxB family.

The enzyme catalyses a lipid X + a UDP-2-N,3-O-bis[(3R)-3-hydroxyacyl]-alpha-D-glucosamine = a lipid A disaccharide + UDP + H(+). It functions in the pathway bacterial outer membrane biogenesis; LPS lipid A biosynthesis. Condensation of UDP-2,3-diacylglucosamine and 2,3-diacylglucosamine-1-phosphate to form lipid A disaccharide, a precursor of lipid A, a phosphorylated glycolipid that anchors the lipopolysaccharide to the outer membrane of the cell. The chain is Lipid-A-disaccharide synthase from Alkalilimnicola ehrlichii (strain ATCC BAA-1101 / DSM 17681 / MLHE-1).